Reading from the N-terminus, the 216-residue chain is Ras-related protein RabN1 (216 aa).

15 to 22 (GDYNSGKT) is a binding site for GTP. The Effector region signature appears at 37–44 (TCPSTFDL). GTP-binding positions include 62 to 66 (DTAGQ) and 128 to 131 (TKSD). Residue C216 is the site of S-geranylgeranyl cysteine attachment.

This sequence belongs to the small GTPase superfamily. Rab family.

Its subcellular location is the cell membrane. In Dictyostelium discoideum (Social amoeba), this protein is Ras-related protein RabN1 (rabN1).